A 290-amino-acid polypeptide reads, in one-letter code: Undecaprenyl-diphosphatase (290 aa).

The next 8 membrane-spanning stretches (helical) occupy residues Met-1–Val-21, Met-49–Trp-69, Leu-101–Ala-121, Val-126–Trp-146, Ile-160–Leu-180, Tyr-203–Val-223, Val-232–Leu-252, and Val-266–Ala-286.

The protein belongs to the UppP family.

The protein localises to the cell inner membrane. The enzyme catalyses di-trans,octa-cis-undecaprenyl diphosphate + H2O = di-trans,octa-cis-undecaprenyl phosphate + phosphate + H(+). In terms of biological role, catalyzes the dephosphorylation of undecaprenyl diphosphate (UPP). Confers resistance to bacitracin. This Alkalilimnicola ehrlichii (strain ATCC BAA-1101 / DSM 17681 / MLHE-1) protein is Undecaprenyl-diphosphatase.